The sequence spans 414 residues: Esterase FrsA (414 aa).

Belongs to the FrsA family.

It catalyses the reaction a carboxylic ester + H2O = an alcohol + a carboxylate + H(+). In terms of biological role, catalyzes the hydrolysis of esters. In Escherichia coli O127:H6 (strain E2348/69 / EPEC), this protein is Esterase FrsA.